Consider the following 80-residue polypeptide: ATP synthase subunit c (80 aa).

Helical transmembrane passes span 8–28 and 55–75; these read MIYFAAAIMLGMAAVGAAIGI and IVMGLVDAIPMIVVGMALYLI.

Belongs to the ATPase C chain family. As to quaternary structure, F-type ATPases have 2 components, F(1) - the catalytic core - and F(0) - the membrane proton channel. F(1) has five subunits: alpha(3), beta(3), gamma(1), delta(1), epsilon(1). F(0) has three main subunits: a(1), b(2) and c(10-14). The alpha and beta chains form an alternating ring which encloses part of the gamma chain. F(1) is attached to F(0) by a central stalk formed by the gamma and epsilon chains, while a peripheral stalk is formed by the delta and b chains.

The protein resides in the cell inner membrane. Its function is as follows. F(1)F(0) ATP synthase produces ATP from ADP in the presence of a proton or sodium gradient. F-type ATPases consist of two structural domains, F(1) containing the extramembraneous catalytic core and F(0) containing the membrane proton channel, linked together by a central stalk and a peripheral stalk. During catalysis, ATP synthesis in the catalytic domain of F(1) is coupled via a rotary mechanism of the central stalk subunits to proton translocation. In terms of biological role, key component of the F(0) channel; it plays a direct role in translocation across the membrane. A homomeric c-ring of between 10-14 subunits forms the central stalk rotor element with the F(1) delta and epsilon subunits. The sequence is that of ATP synthase subunit c from Aeromonas salmonicida (strain A449).